The following is a 268-amino-acid chain: Receptor expression-enhancing protein 2 (268 aa).

The next 2 membrane-spanning stretches (helical) occupy residues 1–21 (MVSW…YPAY) and 35–55 (YVKW…ETIT). Residues 170-268 (GDDTHTAATL…TTANNVAESP (99 aa)) are disordered. A compositionally biased stretch (low complexity) spans 180–196 (PRAKTATRTVRATPVPA). Over residues 199–216 (ESQHSSRSDDQSDSRTEH) the composition is skewed to basic and acidic residues. Residues 228-248 (RIAITRAAKKPAAAKTEQTTK) show a composition bias toward low complexity. The span at 249–258 (TVKKAPKKKP) shows a compositional bias: basic residues.

This sequence belongs to the DP1 family. Interacts with odorant receptor proteins.

It localises to the membrane. May enhance the cell surface expression of odorant receptors. This chain is Receptor expression-enhancing protein 2 (reep2), found in Danio rerio (Zebrafish).